The primary structure comprises 367 residues: tRNA-specific 2-thiouridylase MnmA (367 aa).

ATP-binding positions include 9–16 (LMSGGVDS) and phenylalanine 35. The active-site Nucleophile is the cysteine 107. Cysteine 107 and cysteine 205 are joined by a disulfide. Residue glycine 131 participates in ATP binding. An interaction with tRNA region spans residues 155-157 (KDQ). The active-site Cysteine persulfide intermediate is the cysteine 205.

It belongs to the MnmA/TRMU family.

Its subcellular location is the cytoplasm. It carries out the reaction S-sulfanyl-L-cysteinyl-[protein] + uridine(34) in tRNA + AH2 + ATP = 2-thiouridine(34) in tRNA + L-cysteinyl-[protein] + A + AMP + diphosphate + H(+). Catalyzes the 2-thiolation of uridine at the wobble position (U34) of tRNA, leading to the formation of s(2)U34. The polypeptide is tRNA-specific 2-thiouridylase MnmA (Petrotoga mobilis (strain DSM 10674 / SJ95)).